The following is a 509-amino-acid chain: Angiopoietin-4 (509 aa).

A signal peptide spans 1-21; sequence MLCQPAMLLDGLLLLATMAAA. 8 N-linked (GlcNAc...) asparagine glycosylation sites follow: N105, N135, N149, N167, N256, N306, N317, and N417. A coiled-coil region spans residues 181–269; that stretch reads LSTNKLERQM…LQQQQQQLTE (89 aa). Residues 288–508 enclose the Fibrinogen C-terminal domain; that stretch reads KTPKPVFQDC…GTRMMLRPMG (221 aa). C297 and C326 are joined by a disulfide. Positions 416–436 are disordered; that stretch reads VNDSSSSAGRKNSLAPQGTKF. C450 and C463 are joined by a disulfide.

As to quaternary structure, homodimer; disulfide-linked. Interacts with TEK/TIE2. As to expression, widely expressed.

Its subcellular location is the secreted. Its function is as follows. Binds to TEK/TIE2, modulating ANGPT1 signaling. Can induce tyrosine phosphorylation of TEK/TIE2. Promotes endothelial cell survival, migration and angiogenesis. The polypeptide is Angiopoietin-4 (Angpt4) (Mus musculus (Mouse)).